A 405-amino-acid chain; its full sequence is Dynactin subunit 2 (405 aa).

A disordered region spans residues 1-24 (MADPKYANLPGIASNEPDVYETSD). 2 coiled-coil regions span residues 102–125 (QQKY…IQTS) and 379–405 (QQTM…KLNK).

It belongs to the dynactin subunit 2 family. As to quaternary structure, subunit of dynactin, a multiprotein complex part of a tripartite complex with dynein and a adapter, such as BICDL1, BICD2 or HOOK3. The dynactin complex is built around ACTR1A/ACTB filament and consists of an actin-related filament composed of a shoulder domain, a pointed end and a barbed end. Its length is defined by its flexible shoulder domain. The soulder is composed of 2 DCTN1 subunits, 4 DCTN2 and 2 DCTN3.

Its subcellular location is the cytoplasm. The protein localises to the cytoskeleton. It localises to the microtubule organizing center. It is found in the centrosome. The protein resides in the membrane. In terms of biological role, part of the dynactin complex that activates the molecular motor dynein for ultra-processive transport along microtubules. In the dynactin soulder domain, binds the ACTR1A filament and acts as a molecular ruler to determine the length. Modulates cytoplasmic dynein binding to an organelle, and plays a role in prometaphase chromosome alignment and spindle organization during mitosis. Involved in anchoring microtubules to centrosomes. The sequence is that of Dynactin subunit 2 (dctn2) from Danio rerio (Zebrafish).